We begin with the raw amino-acid sequence, 723 residues long: Malate synthase G (723 aa).

Acetyl-CoA-binding positions include valine 118, 125-126, serine 274, and arginine 311; that span reads RY. Arginine 338 functions as the Proton acceptor in the catalytic mechanism. Glyoxylate is bound by residues arginine 338, glutamate 427, and 452-455; that span reads GFLD. Positions 427 and 455 each coordinate Mg(2+). Proline 536 lines the acetyl-CoA pocket. Cysteine sulfenic acid (-SOH) is present on cysteine 617. Aspartate 631 acts as the Proton donor in catalysis. Cysteine 688 bears the Cysteine sulfenic acid (-SOH) mark.

This sequence belongs to the malate synthase family. GlcB subfamily. In terms of assembly, monomer. It depends on Mg(2+) as a cofactor.

The protein resides in the cytoplasm. The enzyme catalyses glyoxylate + acetyl-CoA + H2O = (S)-malate + CoA + H(+). Its pathway is carbohydrate metabolism; glyoxylate cycle; (S)-malate from isocitrate: step 2/2. Functionally, involved in the glycolate utilization. Catalyzes the condensation and subsequent hydrolysis of acetyl-coenzyme A (acetyl-CoA) and glyoxylate to form malate and CoA. The polypeptide is Malate synthase G (Shigella flexneri).